Consider the following 1838-residue polypeptide: Collagen alpha-1(V) chain (1838 aa).

An N-terminal signal peptide occupies residues 1-36; that stretch reads MDVHTRWKAARPGALLLSSPLLLFLLLLWAPPSSRA. One can recognise a Laminin G-like domain in the interval 72 to 244; the sequence is DVAYRVSKDA…DYCEHYSPDC (173 aa). Residues 231–443 form a nonhelical region region; it reads RAAYDYCEHY…MPANQDTIFE (213 aa). Tyrosine 234, tyrosine 236, tyrosine 240, tyrosine 262, and tyrosine 263 each carry sulfotyrosine. Disordered stretches follow at residues 242–545 and 559–1574; these read PDCD…QESQ and GPAG…EVIQ. The segment covering 258–268 has biased composition (acidic residues); sequence NPDEYYPEGEG. 4 stretches are compositionally biased toward low complexity: residues 335 to 345, 374 to 387, 413 to 428, and 460 to 469; these read DYDYVPPDDYY, VPTS…TSNP, YDPY…VSPS, and IIEPGMLIEG. The tract at residues 444-558 is interrupted collagenous region; that stretch reads GIGGPRGEKG…ILQQARLALR (115 aa). The segment covering 470–485 has biased composition (pro residues); it reads PPGPEGPAGLPGPPGT. 2 stretches are compositionally biased toward low complexity: residues 506–523 and 559–570; these read LPGA…LMLP and GPAGPMGLTGRP. Residues 559–1570 form a triple-helical region region; that stretch reads GPAGPMGLTG…GLPGPPGPPG (1012 aa). Proline 570, proline 576, and proline 621 each carry 4-hydroxyproline. Lysine 627 is modified (5-hydroxylysine). Residue proline 639 is modified to 4-hydroxyproline. 5-hydroxylysine is present on lysine 642. 5 positions are modified to 4-hydroxyproline: proline 648, proline 654, proline 657, proline 675, and proline 678. The segment covering 671–686 has biased composition (low complexity); sequence PRGLPGEPGPRGLLGP. Proline 680 and proline 686 each carry 3-hydroxyproline. The span at 687–696 shows a compositional bias: pro residues; the sequence is KGPPGPPGPP. Residues proline 690, proline 696, and proline 705 each carry the 4-hydroxyproline modification. A 5-hydroxylysine modification is found at lysine 708. Residues proline 717, proline 720, proline 726, and proline 732 each carry the 4-hydroxyproline modification. Positions 722–741 are enriched in low complexity; it reads QQGNPGAQGLPGPQGAIGPP. Position 744 is a 5-hydroxylysine (lysine 744). A compositionally biased stretch (low complexity) spans 747–756; the sequence is LGKPGLPGMP. 4-hydroxyproline occurs at positions 750, 756, 762, 765, and 771. Lysine 774 bears the 5-hydroxylysine mark. A 4-hydroxyproline mark is found at proline 780 and proline 789. A 5-hydroxylysine mark is found at lysine 795, lysine 804, lysine 807, and lysine 810. Position 816 is a 4-hydroxyproline (proline 816). Lysine 819 bears the 5-hydroxylysine mark. 4-hydroxyproline is present on proline 834. Residues 837–846 show a composition bias toward basic and acidic residues; it reads RGEDGPEGPK. 5-hydroxylysine is present on residues lysine 846 and lysine 864. 4-hydroxyproline occurs at positions 870, 873, and 876. A 5-hydroxylysine modification is found at lysine 882. A 4-hydroxyproline mark is found at proline 888 and proline 891. 5-hydroxylysine is present on lysine 897. Residues proline 903 and proline 906 each carry the 4-hydroxyproline modification. The span at 908–917 shows a compositional bias: low complexity; sequence PRGQRGPTGP. Residues proline 930 and proline 945 each carry the 4-hydroxyproline modification. Low complexity-rich tracts occupy residues 971 to 990 and 999 to 1011; these read KDGL…QGKT and VGPQ…TGPM. 4-hydroxyproline is present on residues proline 1017, proline 1020, proline 1023, and proline 1029. Low complexity predominate over residues 1088-1104; sequence SPGERGPAGAAGPIGIP. The segment covering 1106 to 1115 has biased composition (pro residues); it reads RPGPQGPPGP. 2 positions are modified to 4-hydroxyproline: proline 1221 and proline 1224. A compositionally biased stretch (low complexity) spans 1259-1268; it reads PSGAPGADGP. The segment covering 1294–1303 has biased composition (gly residues); that stretch reads GLPGEGGPLG. Composition is skewed to pro residues over residues 1380–1398 and 1454–1469; these read TGEP…PGPA and SPGP…PPGL. A 4-hydroxyproline mark is found at proline 1467 and proline 1470. Positions 1485-1494 are enriched in low complexity; it reads PGLIGLIGPP. Pro residues predominate over residues 1526–1541; the sequence is PLGPPGPPGLPGPPGP. Positions 1542–1554 are enriched in low complexity; the sequence is KGAKGSSGPTGPK. Positions 1571 to 1605 are nonhelical region; the sequence is EVIQPLPIQASRTRRNIDASQLLDDGAGESYVDYA. A sulfotyrosine mark is found at tyrosine 1601 and tyrosine 1604. The Fibrillar collagen NC1 domain maps to 1609–1837; the sequence is EEIFGSLNSL…GFEVGPACFL (229 aa).

Belongs to the fibrillar collagen family. Trimers of two alpha 1(V) and one alpha 2(V) chains in most tissues and trimers of one alpha 1(V), one alpha 2(V), and one alpha 3(V) chains in placenta. Interacts with CSPG4. In terms of processing, hydroxylation on proline residues within the sequence motif, GXPG, is most likely to be 4-hydroxy as this fits the requirement for 4-hydroxylation in vertebrates. Post-translationally, sulfated on 40% of tyrosines. In terms of tissue distribution, widely expressed. Isoform 2 is more highly expressed in liver, kidney and lung.

The protein localises to the secreted. The protein resides in the extracellular space. Its subcellular location is the extracellular matrix. Functionally, type V collagen is a member of group I collagen (fibrillar forming collagen). It is a minor connective tissue component of nearly ubiquitous distribution. Type V collagen binds to DNA, heparan sulfate, thrombospondin, heparin, and insulin. Transcriptionally activated by CEBPZ, which recognizes a CCAAT-like motif, CAAAT in the COL5A1 promoter. The chain is Collagen alpha-1(V) chain (Col5a1) from Mus musculus (Mouse).